The primary structure comprises 173 residues: MAEKRNIFLIGPMGAGKSTIGRQLSQQLNMEFFDSDQEIEKRTGANISWVFDVEGEHGFRQREVKVIDELTKKQGIVLATGGGSVKFKENRNILSARGIVIYLETTIEKQLSRTKRDKKRPLLQSNISNRTVLENLAYERNPLYEEIADFKIQTDNQSAKSVAYSIIHLLEKM.

14–19 contributes to the ATP binding site; it reads GAGKST. Ser-18 is a binding site for Mg(2+). Residues Asp-36, Arg-60, and Gly-82 each contribute to the substrate site. ATP is bound at residue Arg-120. A substrate-binding site is contributed by Arg-140. ATP is bound at residue Gln-157.

Belongs to the shikimate kinase family. Monomer. The cofactor is Mg(2+).

It is found in the cytoplasm. It catalyses the reaction shikimate + ATP = 3-phosphoshikimate + ADP + H(+). The protein operates within metabolic intermediate biosynthesis; chorismate biosynthesis; chorismate from D-erythrose 4-phosphate and phosphoenolpyruvate: step 5/7. Functionally, catalyzes the specific phosphorylation of the 3-hydroxyl group of shikimic acid using ATP as a cosubstrate. This is Shikimate kinase from Buchnera aphidicola subsp. Schizaphis graminum (strain Sg).